The sequence spans 425 residues: tRNA(Ile)-lysidine synthase (425 aa).

27 to 32 lines the ATP pocket; that stretch reads SGGLDS.

The protein belongs to the tRNA(Ile)-lysidine synthase family.

It localises to the cytoplasm. The enzyme catalyses cytidine(34) in tRNA(Ile2) + L-lysine + ATP = lysidine(34) in tRNA(Ile2) + AMP + diphosphate + H(+). Functionally, ligates lysine onto the cytidine present at position 34 of the AUA codon-specific tRNA(Ile) that contains the anticodon CAU, in an ATP-dependent manner. Cytidine is converted to lysidine, thus changing the amino acid specificity of the tRNA from methionine to isoleucine. The sequence is that of tRNA(Ile)-lysidine synthase from Streptococcus pneumoniae (strain JJA).